The primary structure comprises 279 residues: MLFIELLKAIFFGVIEGVTEWLPISSTGHLILVQEFIRLHQDKAFMEMFNIVIQLGAIIAVIVIYFERLNPFQPGKSPQQIRLTWQLWLKVAIACIPSIIIAVPLDDWFDVHFNHMLPIAIALIVYGIAFLWIEKRNQTLEPRVVKLSRMSYKTAFFIGCFQVLSIIPGTSRSGATILGAIILGASRTVAADFTFFLAIPTMFGYSGLKALKFFIDGNHLTLSQLLVLLVASLTAFAVSLYVIKLLTDYVKKHDFTVFGRYRIVLGSLLIVYSVFKSLF.

8 consecutive transmembrane segments (helical) span residues 2–22 (LFIE…TEWL), 44–64 (AFME…VIVI), 85–105 (WQLW…AVPL), 113–133 (FNHM…FLWI), 163–183 (VLSI…AIIL), 188–208 (TVAA…YSGL), 225–245 (LLVL…VIKL), and 255–275 (FTVF…YSVF).

The protein belongs to the UppP family.

It localises to the cell membrane. It catalyses the reaction di-trans,octa-cis-undecaprenyl diphosphate + H2O = di-trans,octa-cis-undecaprenyl phosphate + phosphate + H(+). Catalyzes the dephosphorylation of undecaprenyl diphosphate (UPP). Confers resistance to bacitracin. The protein is Undecaprenyl-diphosphatase of Streptococcus equi subsp. zooepidemicus (strain MGCS10565).